A 130-amino-acid chain; its full sequence is Large ribosomal subunit protein eL32 (130 aa).

Belongs to the eukaryotic ribosomal protein eL32 family. In terms of assembly, part of the 50S ribosomal subunit.

This chain is Large ribosomal subunit protein eL32, found in Pyrococcus furiosus (strain ATCC 43587 / DSM 3638 / JCM 8422 / Vc1).